A 561-amino-acid polypeptide reads, in one-letter code: Dihydroxy-acid dehydratase (561 aa).

A Mg(2+)-binding site is contributed by Asp-78. Cys-119 serves as a coordination point for [2Fe-2S] cluster. The Mg(2+) site is built by Asp-120 and Lys-121. Lys-121 carries the post-translational modification N6-carboxylysine. Cys-192 serves as a coordination point for [2Fe-2S] cluster. Mg(2+) is bound at residue Glu-448. Residue Ser-474 is the Proton acceptor of the active site.

The protein belongs to the IlvD/Edd family. Homodimer. [2Fe-2S] cluster serves as cofactor. It depends on Mg(2+) as a cofactor.

The enzyme catalyses (2R)-2,3-dihydroxy-3-methylbutanoate = 3-methyl-2-oxobutanoate + H2O. The catalysed reaction is (2R,3R)-2,3-dihydroxy-3-methylpentanoate = (S)-3-methyl-2-oxopentanoate + H2O. The protein operates within amino-acid biosynthesis; L-isoleucine biosynthesis; L-isoleucine from 2-oxobutanoate: step 3/4. It functions in the pathway amino-acid biosynthesis; L-valine biosynthesis; L-valine from pyruvate: step 3/4. Functions in the biosynthesis of branched-chain amino acids. Catalyzes the dehydration of (2R,3R)-2,3-dihydroxy-3-methylpentanoate (2,3-dihydroxy-3-methylvalerate) into 2-oxo-3-methylpentanoate (2-oxo-3-methylvalerate) and of (2R)-2,3-dihydroxy-3-methylbutanoate (2,3-dihydroxyisovalerate) into 2-oxo-3-methylbutanoate (2-oxoisovalerate), the penultimate precursor to L-isoleucine and L-valine, respectively. This is Dihydroxy-acid dehydratase from Sulfurimonas denitrificans (strain ATCC 33889 / DSM 1251) (Thiomicrospira denitrificans (strain ATCC 33889 / DSM 1251)).